The primary structure comprises 562 residues: Adenylate kinase isoenzyme 5 (562 aa).

Adenylate kinase regions lie at residues 133–316 and 377–559; these read KIIL…MAVD and KIIF…TAID. ATP is bound at residue 142–147; it reads GSGKGT. An NMP 1 region spans residues 162 to 193; it reads SVGELLRKKIHSTSSNRKWSLIAKIITTGELA. AMP contacts are provided by residues Arg168, 191–193, 219–222, and Gln226; these read ELA and GFPR. Residues 256–266 form an LID 1 region; the sequence is KRAEQQGRPDD. Residue Arg257 coordinates ATP. The AMP site is built by Arg263 and Arg274. Position 386–391 (386–391) interacts with ATP; that stretch reads GSGKGT. Positions 406 to 435 are NMP 2; it reads STGELLREELASESERSKLIRDIMERGDLV. AMP is bound by residues Thr407, Arg412, 433–435, 462–465, and Gln469; these read DLV and GYPR. Residues 499-509 form an LID 2 region; that stretch reads QRSRSSLPVDD. Residue Arg500 participates in ATP binding. Arg517 lines the AMP pocket. Gly545 contacts ATP.

The protein belongs to the adenylate kinase family. Monomer. Interacts with YWHAZ. In terms of tissue distribution, brain specific.

The protein resides in the cytoplasm. It catalyses the reaction AMP + ATP = 2 ADP. The catalysed reaction is a 2'-deoxyribonucleoside 5'-diphosphate + ATP = a 2'-deoxyribonucleoside 5'-triphosphate + ADP. It carries out the reaction a ribonucleoside 5'-diphosphate + ATP = a ribonucleoside 5'-triphosphate + ADP. Functionally, nucleoside monophosphate (NMP) kinase that catalyzes the reversible transfer of the terminal phosphate group between nucleoside triphosphates and monophosphates. Active on AMP and dAMP with ATP as a donor. When GTP is used as phosphate donor, the enzyme phosphorylates AMP, CMP, and to a small extent dCMP. Also displays broad nucleoside diphosphate kinase activity. The sequence is that of Adenylate kinase isoenzyme 5 (AK5) from Homo sapiens (Human).